Consider the following 114-residue polypeptide: Large ribosomal subunit protein bL19 (114 aa).

The protein belongs to the bacterial ribosomal protein bL19 family.

Its function is as follows. This protein is located at the 30S-50S ribosomal subunit interface and may play a role in the structure and function of the aminoacyl-tRNA binding site. This Clostridium botulinum (strain Loch Maree / Type A3) protein is Large ribosomal subunit protein bL19.